The chain runs to 207 residues: MMQDVSSSPVSPADDSLSNSEEEPDRQQPPSGKRGGRKRRSSRRSAGGGAGPGGAAGGGVGGGDEPGSPAQGKRGKKSAGCGGGGSAGGGGGGGGGGSSSGGGSPQSYEELQTQRVMANVRERQRTQSLNEAFAALRKIIPTLPSDKLSKIQTLKLAARYIDFLYQVLQSDELDSKMASCSYVAHERLSYAFSVWRMEGAWSMSASH.

Positions 1-18 are enriched in low complexity; that stretch reads MMQDVSSSPVSPADDSLS. The disordered stretch occupies residues 1-110; sequence MMQDVSSSPV…GGGSPQSYEE (110 aa). A compositionally biased stretch (basic residues) spans 34–43; that stretch reads RGGRKRRSSR. Gly residues-rich tracts occupy residues 46–65 and 80–104; these read AGGG…GGDE and GCGG…GGGS. Positions 113–164 constitute a bHLH domain; that stretch reads TQRVMANVRERQRTQSLNEAFAALRKIIPTLPSDKLSKIQTLKLAARYIDFL. The segment at 166–196 is sufficient for transactivation activity; that stretch reads QVLQSDELDSKMASCSYVAHERLSYAFSVWR.

In terms of assembly, efficient DNA binding requires dimerization with another bHLH protein. Homodimer or heterodimer with E proteins such as TCF3. ID1 binds preferentially to TCF3 but does not interact efficiently with TWIST1 so ID1 levels control the amount of TCF3 available to dimerize with TWIST and thus determine the type of dimer formed.

The protein localises to the nucleus. Its function is as follows. Acts as a transcriptional regulator. Inhibits myogenesis by sequestrating E proteins, inhibiting trans-activation by MEF2, and inhibiting DNA-binding by MYOD1 through physical interaction. This interaction probably involves the basic domains of both proteins. Also represses expression of pro-inflammatory cytokines such as TNFA and IL1B. Regulates cranial suture patterning and fusion. Activates transcription as a heterodimer with E proteins. Regulates gene expression differentially, depending on dimer composition. Homodimers induce expression of FGFR2 and POSTN while heterodimers repress FGFR2 and POSTN expression and induce THBS1 expression. Heterodimerization is also required for osteoblast differentiation. Represses the activity of the circadian transcriptional activator: NPAS2-BMAL1 heterodimer. This Cebus capucinus (White-faced sapajou) protein is Twist-related protein 1 (TWIST1).